A 98-amino-acid chain; its full sequence is Large ribosomal subunit protein uL23 (98 aa).

It belongs to the universal ribosomal protein uL23 family. As to quaternary structure, part of the 50S ribosomal subunit. Contacts protein L29, and trigger factor when it is bound to the ribosome.

One of the early assembly proteins it binds 23S rRNA. One of the proteins that surrounds the polypeptide exit tunnel on the outside of the ribosome. Forms the main docking site for trigger factor binding to the ribosome. This chain is Large ribosomal subunit protein uL23, found in Streptococcus equi subsp. equi (strain 4047).